Consider the following 592-residue polypeptide: Aspartate--tRNA(Asp/Asn) ligase (592 aa).

An L-aspartate-binding site is contributed by Glu182. Residues 206–209 (QIFK) are aspartate. An L-aspartate-binding site is contributed by Arg228. Residues 228–230 (RDE) and Gln237 each bind ATP. His455 contacts L-aspartate. Glu489 is an ATP binding site. Arg496 contacts L-aspartate. 541–544 (GLDR) lines the ATP pocket.

This sequence belongs to the class-II aminoacyl-tRNA synthetase family. Type 1 subfamily. As to quaternary structure, homodimer.

It localises to the cytoplasm. The enzyme catalyses tRNA(Asx) + L-aspartate + ATP = L-aspartyl-tRNA(Asx) + AMP + diphosphate. Functionally, aspartyl-tRNA synthetase with relaxed tRNA specificity since it is able to aspartylate not only its cognate tRNA(Asp) but also tRNA(Asn). Reaction proceeds in two steps: L-aspartate is first activated by ATP to form Asp-AMP and then transferred to the acceptor end of tRNA(Asp/Asn). In Thermoanaerobacter sp. (strain X514), this protein is Aspartate--tRNA(Asp/Asn) ligase.